We begin with the raw amino-acid sequence, 260 residues long: Ubiquinone/menaquinone biosynthesis C-methyltransferase UbiE (260 aa).

S-adenosyl-L-methionine contacts are provided by residues threonine 83, aspartate 104, 132 to 133 (NA), and serine 149.

This sequence belongs to the class I-like SAM-binding methyltransferase superfamily. MenG/UbiE family.

The catalysed reaction is a 2-demethylmenaquinol + S-adenosyl-L-methionine = a menaquinol + S-adenosyl-L-homocysteine + H(+). The enzyme catalyses a 2-methoxy-6-(all-trans-polyprenyl)benzene-1,4-diol + S-adenosyl-L-methionine = a 5-methoxy-2-methyl-3-(all-trans-polyprenyl)benzene-1,4-diol + S-adenosyl-L-homocysteine + H(+). It functions in the pathway quinol/quinone metabolism; menaquinone biosynthesis; menaquinol from 1,4-dihydroxy-2-naphthoate: step 2/2. It participates in cofactor biosynthesis; ubiquinone biosynthesis. Methyltransferase required for the conversion of demethylmenaquinol (DMKH2) to menaquinol (MKH2) and the conversion of 2-polyprenyl-6-methoxy-1,4-benzoquinol (DDMQH2) to 2-polyprenyl-3-methyl-6-methoxy-1,4-benzoquinol (DMQH2). This is Ubiquinone/menaquinone biosynthesis C-methyltransferase UbiE from Vibrio cholerae serotype O1 (strain ATCC 39315 / El Tor Inaba N16961).